The sequence spans 366 residues: DNA integrity scanning protein DisA (366 aa).

The 139-residue stretch at 21-159 (VHTLKGTLQR…EGKSHMLEQP (139 aa)) folds into the DAC domain. Residues Gly-88, Leu-106, and 119 to 123 (TRHRS) contribute to the ATP site.

The protein belongs to the DisA family. As to quaternary structure, homooctamer. Requires Mg(2+) as cofactor.

It catalyses the reaction 2 ATP = 3',3'-c-di-AMP + 2 diphosphate. Participates in a DNA-damage check-point. DisA forms globular foci that rapidly scan along the chromosomes searching for lesions. Functionally, also has diadenylate cyclase activity, catalyzing the condensation of 2 ATP molecules into cyclic di-AMP (c-di-AMP). c-di-AMP likely acts as a signaling molecule that may couple DNA integrity with a cellular process. The chain is DNA integrity scanning protein DisA from Corynebacterium glutamicum (strain ATCC 13032 / DSM 20300 / JCM 1318 / BCRC 11384 / CCUG 27702 / LMG 3730 / NBRC 12168 / NCIMB 10025 / NRRL B-2784 / 534).